We begin with the raw amino-acid sequence, 490 residues long: Cobyric acid synthase (490 aa).

The 194-residue stretch at 251 to 444 folds into the GATase cobBQ-type domain; it reads GLTIAVIHLP…LHGIFANDAF (194 aa). Cys329 functions as the Nucleophile in the catalytic mechanism. Residue His436 is part of the active site.

It belongs to the CobB/CobQ family. CobQ subfamily.

It participates in cofactor biosynthesis; adenosylcobalamin biosynthesis. Functionally, catalyzes amidations at positions B, D, E, and G on adenosylcobyrinic A,C-diamide. NH(2) groups are provided by glutamine, and one molecule of ATP is hydrogenolyzed for each amidation. The protein is Cobyric acid synthase of Roseiflexus castenholzii (strain DSM 13941 / HLO8).